A 502-amino-acid chain; its full sequence is Regulator of hypoxia-inducible factor 1 (502 aa).

11 helical membrane-spanning segments follow: residues 54-74, 92-112, 138-158, 188-208, 241-261, 272-292, 335-355, 367-387, 396-416, 437-457, and 465-485; these read LLAWMTLVVIGTLAPVSVFSC, LDVLDIFRFVAILWVMLNHTG, IFGALMGNSALGVEIFLVLSG, LAPSMFIFVYIAAGPIMNALL, MGYLWYLGLDMQLYMVAPIFL, MALTITTIIASMVIRAGYCTA, GPFLIGLLLGYITVSSKYIMV, LIVAIATIYAILPEYWNPNAG, TAVFRSVFAMAISGMIAALYF, AYLLHMPVVYIFNWLPFLQAA, and LVLPFVAILSFIAALIFYLFI.

In terms of tissue distribution, expressed in intestine, some sensory neurons in the head, body wall muscles and socket cells.

The protein localises to the endoplasmic reticulum membrane. In terms of biological role, involved in the response to variation in environmental oxygen levels by inhibiting hif-1-mediated gene transcription in a vhl-1-independent manner. Plays a role in susceptibility to killing mediated by P.aeruginosa and by pore-forming toxins produced by B.thuringiensis. Probably by preventing hif-1 transcriptional activity, regulates behavioral responses, such as locomotion speed following acute reoxygenation. Plays a role in normal egg-laying probably by regulating spermatogenesis and in body morphogenesis. The protein is Regulator of hypoxia-inducible factor 1 of Caenorhabditis elegans.